Consider the following 193-residue polypeptide: uncharacterized protein (193 aa).

The disordered stretch occupies residues 158 to 193 (YNPIYDDHNPLPPEKKKSILSRTRSTKLSSGEITPV). Residues 162–174 (YDDHNPLPPEKKK) show a composition bias toward basic and acidic residues. Positions 177–193 (LSRTRSTKLSSGEITPV) are enriched in polar residues.

This is an uncharacterized protein from Micromonas pusilla (Picoplanktonic green alga).